A 421-amino-acid chain; its full sequence is Homoserine dehydrogenase (421 aa).

V15, A34, and V44 together coordinate NAD(+). Position 15 (V15) interacts with NADP(+). NADPH is bound at residue V15. The NADP(+) site is built by R46 and K103. Residues R46 and K103 each coordinate NADPH. Na(+)-binding residues include E125, V128, G130, and I132. NADP(+)-binding residues include G183 and E186. L-homoserine contacts are provided by E186 and D197. K201 acts as the Proton donor in catalysis. G298 serves as a coordination point for NAD(+). Position 298 (G298) interacts with NADP(+). G298 contacts NADPH. The ACT domain maps to 343 to 418; that stretch reads YARLLVSDEK…SVLDTPKMIR (76 aa).

It belongs to the homoserine dehydrogenase family. A metal cation serves as cofactor.

It catalyses the reaction L-homoserine + NADP(+) = L-aspartate 4-semialdehyde + NADPH + H(+). The enzyme catalyses L-homoserine + NAD(+) = L-aspartate 4-semialdehyde + NADH + H(+). Its pathway is amino-acid biosynthesis; L-methionine biosynthesis via de novo pathway; L-homoserine from L-aspartate: step 3/3. It participates in amino-acid biosynthesis; L-threonine biosynthesis; L-threonine from L-aspartate: step 3/5. Its function is as follows. Catalyzes the conversion of L-aspartate-beta-semialdehyde (L-Asa) to L-homoserine (L-Hse), the third step in the biosynthesis of threonine and methionine from aspartate. The sequence is that of Homoserine dehydrogenase (hom) from Helicobacter pylori (strain ATCC 700392 / 26695) (Campylobacter pylori).